We begin with the raw amino-acid sequence, 100 residues long: Large ribosomal subunit protein eL31 (100 aa).

Belongs to the eukaryotic ribosomal protein eL31 family.

This is Large ribosomal subunit protein eL31 from Hyperthermus butylicus (strain DSM 5456 / JCM 9403 / PLM1-5).